We begin with the raw amino-acid sequence, 159 residues long: uncharacterized protein (159 aa).

Residues 1 to 20 form the signal peptide; sequence MKKIIAMSLLMFSVVMSVNA.

This is an uncharacterized protein from Pasteurella multocida (strain Pm70).